We begin with the raw amino-acid sequence, 287 residues long: Flagellin (287 aa).

The protein belongs to the bacterial flagellin family.

The protein localises to the secreted. The protein resides in the bacterial flagellum. In terms of biological role, flagellin is the subunit protein which polymerizes to form the filaments of bacterial flagella. This is Flagellin (flaA) from Listeria monocytogenes serovar 1/2a (strain ATCC BAA-679 / EGD-e).